A 229-amino-acid polypeptide reads, in one-letter code: Uracil-DNA glycosylase (229 aa).

Asp65 acts as the Proton acceptor in catalysis.

Belongs to the uracil-DNA glycosylase (UDG) superfamily. UNG family.

Its subcellular location is the cytoplasm. The catalysed reaction is Hydrolyzes single-stranded DNA or mismatched double-stranded DNA and polynucleotides, releasing free uracil.. Its function is as follows. Excises uracil residues from the DNA which can arise as a result of misincorporation of dUMP residues by DNA polymerase or due to deamination of cytosine. The polypeptide is Uracil-DNA glycosylase (Oceanobacillus iheyensis (strain DSM 14371 / CIP 107618 / JCM 11309 / KCTC 3954 / HTE831)).